The primary structure comprises 365 residues: tRNA/tmRNA (uracil-C(5))-methyltransferase (365 aa).

Gln-188, Tyr-216, Asn-221, Glu-237, and Asp-297 together coordinate S-adenosyl-L-methionine. Residue Cys-322 is the Nucleophile of the active site. Catalysis depends on Glu-356, which acts as the Proton acceptor.

The protein belongs to the class I-like SAM-binding methyltransferase superfamily. RNA M5U methyltransferase family. TrmA subfamily.

It carries out the reaction uridine(54) in tRNA + S-adenosyl-L-methionine = 5-methyluridine(54) in tRNA + S-adenosyl-L-homocysteine + H(+). The catalysed reaction is uridine(341) in tmRNA + S-adenosyl-L-methionine = 5-methyluridine(341) in tmRNA + S-adenosyl-L-homocysteine + H(+). Functionally, dual-specificity methyltransferase that catalyzes the formation of 5-methyluridine at position 54 (m5U54) in all tRNAs, and that of position 341 (m5U341) in tmRNA (transfer-mRNA). The polypeptide is tRNA/tmRNA (uracil-C(5))-methyltransferase (Aggregatibacter aphrophilus (strain NJ8700) (Haemophilus aphrophilus)).